Here is a 248-residue protein sequence, read N- to C-terminus: MKSSTQAVLEHTAIPKHIAVIMDGNGRWAKKRFLPRIMGHKRGLDALENMVKHCAKLGVQYLTVFAFSTENWRRPEDEVSFLMGLFLQALQKQVRRLHENNMRLKILGSRERFNRQILQGIEEAEALTANNTGLTLSIAADYGGRWDILQAANKLIAEGVSEITEDTLAKHLMLGDAPEPDLFIRTGGETRISNFLLWQMAYAELYFTDILWPDFDGKALDDAVASFQKRERRFGRTSEQLPIEQQRN.

D23 is a catalytic residue. D23 lines the Mg(2+) pocket. Residues 24–27 (GNGR), W28, R36, H40, and 68–70 (STE) contribute to the substrate site. N71 acts as the Proton acceptor in catalysis. Substrate is bound by residues W72, R74, R185, and 191-193 (RIS). E204 is a Mg(2+) binding site.

This sequence belongs to the UPP synthase family. Homodimer. Mg(2+) is required as a cofactor.

Catalyzes the condensation of isopentenyl diphosphate (IPP) with allylic pyrophosphates generating different type of terpenoids. The chain is Isoprenyl transferase from Neisseria meningitidis serogroup B (strain ATCC BAA-335 / MC58).